The primary structure comprises 79 residues: Cell division protein ZapB (79 aa).

Residues 4–78 (EVFEKLEAKV…LRALLGKMEE (75 aa)) adopt a coiled-coil conformation.

Belongs to the ZapB family. In terms of assembly, homodimer. The ends of the coiled-coil dimer bind to each other, forming polymers. Interacts with FtsZ.

It localises to the cytoplasm. Non-essential, abundant cell division factor that is required for proper Z-ring formation. It is recruited early to the divisome by direct interaction with FtsZ, stimulating Z-ring assembly and thereby promoting cell division earlier in the cell cycle. Its recruitment to the Z-ring requires functional FtsA or ZipA. The sequence is that of Cell division protein ZapB from Pectobacterium carotovorum subsp. carotovorum (strain PC1).